The chain runs to 67 residues: UPF0434 protein Bcep1808_2639 (67 aa).

Belongs to the UPF0434 family.

The sequence is that of UPF0434 protein Bcep1808_2639 from Burkholderia vietnamiensis (strain G4 / LMG 22486) (Burkholderia cepacia (strain R1808)).